A 110-amino-acid polypeptide reads, in one-letter code: Small ribosomal subunit protein eS25 (110 aa).

The segment at methionine 1–glycine 37 is disordered. The span at methionine 12 to glycine 37 shows a compositional bias: basic and acidic residues.

Belongs to the eukaryotic ribosomal protein eS25 family.

The sequence is that of Small ribosomal subunit protein eS25 (rps25e) from Saccharolobus solfataricus (strain ATCC 35092 / DSM 1617 / JCM 11322 / P2) (Sulfolobus solfataricus).